A 186-amino-acid chain; its full sequence is MILSDGLIKELISYRALVIEPLSETQIQPSSVDLTLGSTFLAIDNINVPFLDPKRKETIKYREIHIEKGGQLILQPGFFLLGTTTERLMLPNFLVARVEGRSSLGRMGILIHATAGYVDPGFCGQITLEISNVNNIPVALYPGMRICQVSFELLFENCVIPYGLKGKYQGQEGPEGTRIFLDFLKE.

DCTP-binding positions include 101–106 (RSSLGR), aspartate 119, 127–129 (TLE), glutamine 148, tyrosine 162, and glutamine 171. The active-site Proton donor/acceptor is glutamate 129.

Belongs to the dCTP deaminase family. As to quaternary structure, homotrimer.

It catalyses the reaction dCTP + 2 H2O = dUMP + NH4(+) + diphosphate. Its pathway is pyrimidine metabolism; dUMP biosynthesis; dUMP from dCTP: step 1/1. In terms of biological role, bifunctional enzyme that catalyzes both the deamination of dCTP to dUTP and the hydrolysis of dUTP to dUMP without releasing the toxic dUTP intermediate. The protein is dCTP deaminase, dUMP-forming of Coprothermobacter proteolyticus (strain ATCC 35245 / DSM 5265 / OCM 4 / BT).